Reading from the N-terminus, the 55-residue chain is Large ribosomal subunit protein bL33B (55 aa).

It belongs to the bacterial ribosomal protein bL33 family.

The chain is Large ribosomal subunit protein bL33B from Salinispora arenicola (strain CNS-205).